The following is a 203-amino-acid chain: Adenosylcobalamin/alpha-ribazole phosphatase (203 aa).

The active-site Tele-phosphohistidine intermediate is the His-8. Glu-81 (proton donor/acceptor) is an active-site residue.

Belongs to the phosphoglycerate mutase family.

The enzyme catalyses adenosylcob(III)alamin 5'-phosphate + H2O = adenosylcob(III)alamin + phosphate. It catalyses the reaction alpha-ribazole 5'-phosphate + H2O = alpha-ribazole + phosphate. It participates in nucleoside biosynthesis; alpha-ribazole biosynthesis; alpha-ribazole from 5,6-dimethylbenzimidazole: step 2/2. Functionally, catalyzes the conversion of adenosylcobalamin 5'-phosphate to adenosylcobalamin (vitamin B12); involved in the assembly of the nucleotide loop of cobalamin. Also catalyzes the hydrolysis of the phospho group from alpha-ribazole 5'-phosphate to form alpha-ribazole. The protein is Adenosylcobalamin/alpha-ribazole phosphatase (cobC) of Escherichia coli (strain K12).